We begin with the raw amino-acid sequence, 298 residues long: Protease HtpX homolog (298 aa).

2 consecutive transmembrane segments (helical) span residues 14 to 34 (ILVM…IGYL) and 39 to 59 (VIGG…VIIG). H144 lines the Zn(2+) pocket. E145 is a catalytic residue. H148 contributes to the Zn(2+) binding site. A run of 2 helical transmembrane segments spans residues 159-179 (IALA…NFWW) and 195-215 (IFAI…ATIA). Residue E224 coordinates Zn(2+).

Belongs to the peptidase M48B family. It depends on Zn(2+) as a cofactor.

Its subcellular location is the cell membrane. The protein is Protease HtpX homolog of Limosilactobacillus reuteri (strain DSM 20016) (Lactobacillus reuteri).